Reading from the N-terminus, the 523-residue chain is MSFIYGLQSAARNCFFFRFNLLTNWRKCNTQAVTSRDFHQVKINHIVNKSLGLGVNHGDRWTPLPENFLFYRTFNTKRKGCLLSSRSKEIWMISRKCTAWTDSFSRQLPMKNVPVVPAHSMSHPLNCLPTRDIRSFHTSPRCQAAPAPLLLMILKPAQKLLAIIVGRGIRKWWQALPPNKKELFKESLRKNKWKLFLGLSSFGLLFVVFYFTHLEVSPVTGRSKLLILGKEHFRLLSELEYEAWMEEFKNDMLTEKDARYVAVKAVVHHLIECNQDIPGISEINWIIHVVDSPDINAFVLPNGQVFVFTGLLNSVTDIHQLSFLLGHEIAHAVLEHAAEKASLVHLLDFLGLIFLTTIWAICPRDSLALLGQWIQSKLQEFLFDRPYSRTLEAEADRIGLQLAAKACVDVRASSVFWQQMEFAESLHGHPKLPEWLSTHPSHGNRAEHLDRLIPQALKIRETCNCPPLSGPDPRLLFKLSMKNFLEAEKEDLNITVKQKMDALPIQNQKQIPLTCIVDKRTGS.

Residues 1 to 45 (MSFIYGLQSAARNCFFFRFNLLTNWRKCNTQAVTSRDFHQVKINH) constitute a mitochondrion transit peptide. Residues 46–143 (IVNKSLGLGV…RSFHTSPRCQ (98 aa)) constitute a propeptide that is removed on maturation. Over 144–195 (AAPAPLLLMILKPAQKLLAIIVGRGIRKWWQALPPNKKELFKESLRKNKWKL) the chain is Mitochondrial matrix. Positions 148-167 (PLLLMILKPAQKLLAIIVGR) are cardiolipin-binding. The interval 165–195 (VGRGIRKWWQALPPNKKELFKESLRKNKWKL) is stress-sensor region. The chain crosses the membrane as a helical span at residues 196–216 (FLGLSSFGLLFVVFYFTHLEV). Histidine 327 contacts Zn(2+). Residue glutamate 328 is part of the active site. Zn(2+) contacts are provided by histidine 331 and glutamate 392. Cysteine 407 and cysteine 465 are oxidised to a cystine.

The protein belongs to the peptidase M48 family. In terms of assembly, homooligomer. It depends on Zn(2+) as a cofactor. Post-translationally, autocatalytically cleaved in response to mitochondrial depolarization both at the N-terminus and C-terminus to generate the short active form (S-OMA1). Autocatalytic processing at the C-terminus takes place at residues 447-456. The S-OMA1 form is unstable. OMA1 pre-processing by AFG3L2 may participate in maturation before OMA1 autocatalytic cleavage. Degraded by YMEL1 in response to membrane depolarization. Protein turnover is regulated by prohibitin (PHB and PHB2), which promotes degradation of OMA1 in a cardiolipin-binding manner. May form a redox-dependent disulfide bond. Exists in a semi-oxidized state and is activated by prolonged hypoxia.

The protein resides in the mitochondrion inner membrane. With respect to regulation, protease activity is activated upon autocatalytic cleavage in response to mitochondrial depolarization. Its function is as follows. Metalloprotease that is part of the quality control system in the inner membrane of mitochondria. Activated in response to various mitochondrial stress, leading to the proteolytic cleavage of target proteins, such as OPA1, UQCC3 and DELE1. Involved in the fusion of the mitochondrial inner membranes by mediating cleavage of OPA1 at S1 position, generating the soluble OPA1 (S-OPA1), which cooperates with the membrane form (L-OPA1) to coordinate the fusion of mitochondrial inner membranes. Following stress conditions that induce loss of mitochondrial membrane potential, mediates cleavage of OPA1, leading to excess production of soluble OPA1 (S-OPA1) and negative regulation of mitochondrial fusion. Involved in mitochondrial safeguard in response to transient mitochondrial membrane depolarization (flickering) by catalyzing cleavage of OPA1, leading to excess production of S-OPA1, preventing mitochondrial hyperfusion. Also acts as a regulator of apoptosis: upon BAK and BAX aggregation, mediates cleavage of OPA1, leading to the remodeling of mitochondrial cristae and allowing the release of cytochrome c from mitochondrial cristae. In depolarized mitochondria, may also act as a backup protease for PINK1 by mediating PINK1 cleavage and promoting its subsequent degradation by the proteasome. May also cleave UQCC3 in response to mitochondrial depolarization. Also acts as an activator of the integrated stress response (ISR): in response to mitochondrial stress, mediates cleavage of DELE1 to generate the processed form of DELE1 (S-DELE1), which translocates to the cytosol and activates EIF2AK1/HRI to trigger the ISR. Its role in mitochondrial quality control is essential for regulating lipid metabolism as well as to maintain body temperature and energy expenditure under cold-stress conditions. Binds cardiolipin, possibly regulating its protein turnover. Required for the stability of the respiratory supercomplexes. The protein is Metalloendopeptidase OMA1, mitochondrial of Bos taurus (Bovine).